A 424-amino-acid polypeptide reads, in one-letter code: Serine--tRNA ligase (424 aa).

Residue 230-232 (TAE) coordinates L-serine. 261 to 263 (RSE) is a binding site for ATP. L-serine is bound at residue Glu-284. 348–351 (EISS) serves as a coordination point for ATP. Ser-382 contacts L-serine.

This sequence belongs to the class-II aminoacyl-tRNA synthetase family. Type-1 seryl-tRNA synthetase subfamily. In terms of assembly, homodimer. The tRNA molecule binds across the dimer.

It localises to the cytoplasm. The enzyme catalyses tRNA(Ser) + L-serine + ATP = L-seryl-tRNA(Ser) + AMP + diphosphate + H(+). It catalyses the reaction tRNA(Sec) + L-serine + ATP = L-seryl-tRNA(Sec) + AMP + diphosphate + H(+). It participates in aminoacyl-tRNA biosynthesis; selenocysteinyl-tRNA(Sec) biosynthesis; L-seryl-tRNA(Sec) from L-serine and tRNA(Sec): step 1/1. Catalyzes the attachment of serine to tRNA(Ser). Is also able to aminoacylate tRNA(Sec) with serine, to form the misacylated tRNA L-seryl-tRNA(Sec), which will be further converted into selenocysteinyl-tRNA(Sec). In Solibacter usitatus (strain Ellin6076), this protein is Serine--tRNA ligase.